The following is a 325-amino-acid chain: NADH-quinone oxidoreductase subunit H (325 aa).

8 helical membrane passes run 11-31 (ILLT…CGAF), 81-101 (VIFT…FAIV), 114-134 (IGIL…LFAG), 154-174 (LSYE…AGSF), 186-206 (VWNV…GVAV), 237-257 (FFVG…TLFF), 265-285 (LPPF…FILI), and 304-324 (ICLP…LWQA).

The protein belongs to the complex I subunit 1 family. As to quaternary structure, NDH-1 is composed of 13 different subunits. Subunits NuoA, H, J, K, L, M, N constitute the membrane sector of the complex.

It is found in the cell inner membrane. The catalysed reaction is a quinone + NADH + 5 H(+)(in) = a quinol + NAD(+) + 4 H(+)(out). In terms of biological role, NDH-1 shuttles electrons from NADH, via FMN and iron-sulfur (Fe-S) centers, to quinones in the respiratory chain. The immediate electron acceptor for the enzyme in this species is believed to be ubiquinone. Couples the redox reaction to proton translocation (for every two electrons transferred, four hydrogen ions are translocated across the cytoplasmic membrane), and thus conserves the redox energy in a proton gradient. This subunit may bind ubiquinone. This chain is NADH-quinone oxidoreductase subunit H, found in Escherichia fergusonii (strain ATCC 35469 / DSM 13698 / CCUG 18766 / IAM 14443 / JCM 21226 / LMG 7866 / NBRC 102419 / NCTC 12128 / CDC 0568-73).